We begin with the raw amino-acid sequence, 284 residues long: tRNA dimethylallyltransferase (284 aa).

Residue 6–13 coordinates ATP; that stretch reads GPTASGKS. 8-13 serves as a coordination point for substrate; the sequence is TASGKS. Residues 31–34 are interaction with substrate tRNA; sequence DSLS.

This sequence belongs to the IPP transferase family. As to quaternary structure, monomer. Requires Mg(2+) as cofactor.

It carries out the reaction adenosine(37) in tRNA + dimethylallyl diphosphate = N(6)-dimethylallyladenosine(37) in tRNA + diphosphate. Its function is as follows. Catalyzes the transfer of a dimethylallyl group onto the adenine at position 37 in tRNAs that read codons beginning with uridine, leading to the formation of N6-(dimethylallyl)adenosine (i(6)A). The protein is tRNA dimethylallyltransferase of Nautilia profundicola (strain ATCC BAA-1463 / DSM 18972 / AmH).